We begin with the raw amino-acid sequence, 251 residues long: tRNA pseudouridine synthase A (251 aa).

D53 functions as the Nucleophile in the catalytic mechanism. Y110 contributes to the substrate binding site.

It belongs to the tRNA pseudouridine synthase TruA family. In terms of assembly, homodimer.

The catalysed reaction is uridine(38/39/40) in tRNA = pseudouridine(38/39/40) in tRNA. Formation of pseudouridine at positions 38, 39 and 40 in the anticodon stem and loop of transfer RNAs. The protein is tRNA pseudouridine synthase A of Mesoplasma florum (strain ATCC 33453 / NBRC 100688 / NCTC 11704 / L1) (Acholeplasma florum).